Consider the following 558-residue polypeptide: Potassium-transporting ATPase potassium-binding subunit (558 aa).

The next 11 helical transmembrane spans lie at 1-21 (MDTLAGILQVASVVLVLVLVH), 58-78 (WPAYLRAVLAFSLVGVLVVYG), 85-105 (FLPYALGLPAVPEGISFNTAV), 130-150 (GLAVQNFVSAAVGIAVAIALV), 179-199 (LSLVTAVVLIAGGVIQNFAGF), 245-265 (PTAWTSAFQVLLMLVIPFSLP), 279-299 (TAIAAVMATIAVASLTALTLF), 374-394 (GLYGMLVLAVIAVFVAGLLVG), 416-436 (ILVTPILVLVGTALSFAIPAV), 484-504 (ALGVAMLLGRFVPIVLVLALA), and 527-547 (FVGLLIGVTVIVTALTYFPVL).

It belongs to the KdpA family. The system is composed of three essential subunits: KdpA, KdpB and KdpC.

It is found in the cell membrane. Functionally, part of the high-affinity ATP-driven potassium transport (or Kdp) system, which catalyzes the hydrolysis of ATP coupled with the electrogenic transport of potassium into the cytoplasm. This subunit binds the extracellular potassium ions and delivers the ions to the membrane domain of KdpB through an intramembrane tunnel. This is Potassium-transporting ATPase potassium-binding subunit from Clavibacter sepedonicus (Clavibacter michiganensis subsp. sepedonicus).